Reading from the N-terminus, the 375-residue chain is Tubulinyl-Tyr carboxypeptidase 1 (375 aa).

Residues 1-33 (MPGGKKVVPSGSSSASPNAAATTTAAAAAAAAA) show a composition bias toward low complexity. Residues 1–69 (MPGGKKVVPS…EEDLRDGGVP (69 aa)) form a disordered region. Residues 53-63 (EEPEEEGEEDL) are compositionally biased toward acidic residues. Active-site residues include C179, H214, and S231. Residues 309–375 (RDMRLKIGKG…PDLSGYQIRV (67 aa)) form a disordered region. Residues 329–375 (KKDVSSPQRAQSSPHRRNSRSERRPSGEKKPAEPKAMPDLSGYQIRV) form an involved in heparin-binding and antiangiogenic activity region. Residues 347–361 (SRSERRPSGEKKPAE) show a composition bias toward basic and acidic residues.

Belongs to the transglutaminase-like superfamily. Vasohibin family. In terms of assembly, interacts with SVBP; interaction enhances VASH1 tyrosine carboxypeptidase activity. Post-translationally, ubiquitinated in vitro. Expressed at low level in proliferating endothelial cells at the sprouting front but highly expressed in nonproliferating endothelial cells in the termination zone.

The protein resides in the cytoplasm. The protein localises to the secreted. The catalysed reaction is C-terminal L-alpha-aminoacyl-L-glutamyl-L-glutamyl-L-tyrosyl-[tubulin] + H2O = C-terminal L-alpha-aminoacyl-L-glutamyl-L-glutamyl-[tubulin] + L-tyrosine. In terms of biological role, tyrosine carboxypeptidase that removes the C-terminal tyrosine residue of alpha-tubulin, thereby regulating microtubule dynamics and function. Acts as an angiogenesis inhibitor: inhibits migration, proliferation and network formation by endothelial cells as well as angiogenesis. This inhibitory effect is selective to endothelial cells as it does not affect the migration of smooth muscle cells or fibroblasts. The sequence is that of Tubulinyl-Tyr carboxypeptidase 1 from Mus musculus (Mouse).